The primary structure comprises 336 residues: Ribosomal RNA small subunit methyltransferase C (336 aa).

This sequence belongs to the methyltransferase superfamily. RsmC family. As to quaternary structure, monomer.

It is found in the cytoplasm. It catalyses the reaction guanosine(1207) in 16S rRNA + S-adenosyl-L-methionine = N(2)-methylguanosine(1207) in 16S rRNA + S-adenosyl-L-homocysteine + H(+). In terms of biological role, specifically methylates the guanine in position 1207 of 16S rRNA in the 30S particle. This Buchnera aphidicola subsp. Schizaphis graminum (strain Sg) protein is Ribosomal RNA small subunit methyltransferase C.